Here is a 175-residue protein sequence, read N- to C-terminus: ATP synthase subunit delta (175 aa).

Belongs to the ATPase delta chain family. F-type ATPases have 2 components, F(1) - the catalytic core - and F(0) - the membrane proton channel. F(1) has five subunits: alpha(3), beta(3), gamma(1), delta(1), epsilon(1). F(0) has three main subunits: a(1), b(2) and c(10-14). The alpha and beta chains form an alternating ring which encloses part of the gamma chain. F(1) is attached to F(0) by a central stalk formed by the gamma and epsilon chains, while a peripheral stalk is formed by the delta and b chains.

The protein resides in the cell inner membrane. F(1)F(0) ATP synthase produces ATP from ADP in the presence of a proton or sodium gradient. F-type ATPases consist of two structural domains, F(1) containing the extramembraneous catalytic core and F(0) containing the membrane proton channel, linked together by a central stalk and a peripheral stalk. During catalysis, ATP synthesis in the catalytic domain of F(1) is coupled via a rotary mechanism of the central stalk subunits to proton translocation. In terms of biological role, this protein is part of the stalk that links CF(0) to CF(1). It either transmits conformational changes from CF(0) to CF(1) or is implicated in proton conduction. The sequence is that of ATP synthase subunit delta from Sulfurovum sp. (strain NBC37-1).